A 376-amino-acid polypeptide reads, in one-letter code: MSQEVLTLAQDLISRPSVTPLDEGCQTLMAERLAAQGFEIESMVFEDTTNMWARRGKEGPLFCFAGHTDVVPVGDLNRWHTPPFDPVVIDGYLHGRGAADMKGSLAAMVVATERFVEKHPDHNGSIAFLITSDEEGPFINGTTRVIDTLEARNEKITWSLVGEPSSTHKLGDIVKNGRRGSLTGNLTINGIQGHVAYPHLADNPIHKAAPALDELARMKWDNGNEFFPPTSFQIANINGGTGASNVIPGALEVMFNFRYSTEVTAEILIQRVLNILDAHGLDYDISWIFNGLPFLTGDGPLLDATREAIKQVTGSDTDPQTSGGTSDGRFIAPTGAHVIELGPVNATIHKVNECVKVSDLELLTQCYEVILEKLLC.

Residue H67 participates in Zn(2+) binding. Residue D69 is part of the active site. D100 lines the Zn(2+) pocket. E134 (proton acceptor) is an active-site residue. The Zn(2+) site is built by E135, E163, and H349.

Belongs to the peptidase M20A family. DapE subfamily. In terms of assembly, homodimer. It depends on Zn(2+) as a cofactor. Requires Co(2+) as cofactor.

The enzyme catalyses N-succinyl-(2S,6S)-2,6-diaminopimelate + H2O = (2S,6S)-2,6-diaminopimelate + succinate. It participates in amino-acid biosynthesis; L-lysine biosynthesis via DAP pathway; LL-2,6-diaminopimelate from (S)-tetrahydrodipicolinate (succinylase route): step 3/3. In terms of biological role, catalyzes the hydrolysis of N-succinyl-L,L-diaminopimelic acid (SDAP), forming succinate and LL-2,6-diaminopimelate (DAP), an intermediate involved in the bacterial biosynthesis of lysine and meso-diaminopimelic acid, an essential component of bacterial cell walls. The protein is Succinyl-diaminopimelate desuccinylase of Shewanella woodyi (strain ATCC 51908 / MS32).